Consider the following 391-residue polypeptide: MTRVGVLLMNLGGPERIKDVGPFLYNLFSDPEIIRLPLPIFQKPLAWFISTLRSSKSQKAYQAIGGGSPLRRITEQQARELQSALRNRGINATSYVAMRYWHPFTESAVEDIKADNINEVVVLPLYPHFSISTSGSSFRELRRLREVDKEFQKLSIRCIRSWFDNTGYIASMAELIEQEISSCESPNAAHICFTAHGVPKSYVEEAGDPYKDEIQDCALLIIDKVEKSLGFSNSYTLSYQSRVGPEEWLKPYTEEVLEELGANGVKELIVVPISFVSEHIETLQEIDIEYKKIALNNGIINFRRVKALDTYPLFINGLADLVASCLSGPEISLDEAAKLPEKVKLYPQEKWQWGWNNSAEVWNGRVAMFVFIICFFELVIGNGPLHYIGLL.

The Fe cation site is built by His-196 and Glu-281.

Belongs to the ferrochelatase family.

The protein localises to the cytoplasm. It catalyses the reaction heme b + 2 H(+) = protoporphyrin IX + Fe(2+). It participates in porphyrin-containing compound metabolism; protoheme biosynthesis; protoheme from protoporphyrin-IX: step 1/1. Its function is as follows. Catalyzes the ferrous insertion into protoporphyrin IX. The polypeptide is Ferrochelatase (Prochlorococcus marinus (strain SARG / CCMP1375 / SS120)).